A 250-amino-acid polypeptide reads, in one-letter code: Acetylglutamate kinase (250 aa).

Substrate contacts are provided by residues 41–42 (GG), arginine 63, and asparagine 156.

This sequence belongs to the acetylglutamate kinase family. ArgB subfamily.

The protein resides in the cytoplasm. The catalysed reaction is N-acetyl-L-glutamate + ATP = N-acetyl-L-glutamyl 5-phosphate + ADP. Its pathway is amino-acid biosynthesis; L-arginine biosynthesis; N(2)-acetyl-L-ornithine from L-glutamate: step 2/4. Functionally, catalyzes the ATP-dependent phosphorylation of N-acetyl-L-glutamate. The polypeptide is Acetylglutamate kinase (Listeria monocytogenes serotype 4b (strain F2365)).